A 201-amino-acid chain; its full sequence is DNA polymerase epsilon subunit C (201 aa).

Disordered regions lie at residues 102–165 and 178–201; these read KKRE…KSTR and SALD…STDP. Over residues 117 to 144 the composition is skewed to acidic residues; the sequence is VVIEEPELHEDDGVEEEEEEDEVSEEEE. Composition is skewed to basic and acidic residues over residues 145-164 and 182-201; these read PVHN…DKST and VGEH…STDP. 3 positions are modified to phosphoserine: serine 186, serine 188, and serine 189.

As to quaternary structure, DNA polymerase epsilon is a heterotetramer consisting of POL2, DPB2, DPB3 and DPB4.

The protein localises to the nucleus. As accessory component of the DNA polymerase epsilon (DNA polymerase II) participates in chromosomal DNA replication. It is required during synthesis of the leading and lagging DNA strands at the replication fork and binds at/or near replication origins and moves along DNA with the replication fork. It has 3'-5' proofreading exonuclease activity that correct errors arising during DNA replication. It is also involved in DNA synthesis during DNA repair. The chain is DNA polymerase epsilon subunit C (DPB3) from Saccharomyces cerevisiae (strain ATCC 204508 / S288c) (Baker's yeast).